The primary structure comprises 128 residues: UPF0292 protein MJ1624 (128 aa).

The Toprim domain occupies 23 to 105; the sequence is EKPIIVEGKR…KVNTKIRHEI (83 aa). Mg(2+) is bound by residues Glu-29, Asp-74, and Asp-76.

The protein belongs to the UPF0292 family. Mg(2+) is required as a cofactor.

In Methanocaldococcus jannaschii (strain ATCC 43067 / DSM 2661 / JAL-1 / JCM 10045 / NBRC 100440) (Methanococcus jannaschii), this protein is UPF0292 protein MJ1624.